A 142-amino-acid polypeptide reads, in one-letter code: Small ribosomal subunit protein uS12 (142 aa).

It belongs to the universal ribosomal protein uS12 family. In terms of assembly, part of the 30S ribosomal subunit.

Its function is as follows. With S4 and S5 plays an important role in translational accuracy. Located at the interface of the 30S and 50S subunits. This Methanosarcina mazei (strain ATCC BAA-159 / DSM 3647 / Goe1 / Go1 / JCM 11833 / OCM 88) (Methanosarcina frisia) protein is Small ribosomal subunit protein uS12.